A 70-amino-acid polypeptide reads, in one-letter code: Small ribosomal subunit protein bS21 (70 aa).

The protein belongs to the bacterial ribosomal protein bS21 family.

The protein is Small ribosomal subunit protein bS21 of Polaromonas naphthalenivorans (strain CJ2).